A 117-amino-acid chain; its full sequence is Flagellar transcriptional regulator FlhD (117 aa).

This sequence belongs to the FlhD family. As to quaternary structure, homodimer; disulfide-linked. Forms a heterohexamer composed of two FlhC and four FlhD subunits. Each FlhC binds a FlhD dimer, forming a heterotrimer, and a hexamer assembles by dimerization of two heterotrimers.

Its subcellular location is the cytoplasm. Functions in complex with FlhC as a master transcriptional regulator that regulates transcription of several flagellar and non-flagellar operons by binding to their promoter region. Activates expression of class 2 flagellar genes, including fliA, which is a flagellum-specific sigma factor that turns on the class 3 genes. Also regulates genes whose products function in a variety of physiological pathways. The sequence is that of Flagellar transcriptional regulator FlhD from Erwinia amylovora (strain CFBP1430).